A 339-amino-acid chain; its full sequence is Ketol-acid reductoisomerase (NADP(+)) (339 aa).

In terms of domain architecture, KARI N-terminal Rossmann spans 1 to 182 (MRVYYDRDAD…GGGRAGIIET (182 aa)). NADP(+) is bound by residues 24 to 27 (YGSQ), arginine 48, serine 51, and 83 to 86 (DEGQ). The active site involves histidine 108. Glycine 134 contacts NADP(+). In terms of domain architecture, KARI C-terminal knotted spans 183 to 328 (SFKEEVETDL…EKLRGMMPWI (146 aa)). Aspartate 191, glutamate 195, glutamate 227, and glutamate 231 together coordinate Mg(2+). Serine 252 contributes to the substrate binding site.

It belongs to the ketol-acid reductoisomerase family. It depends on Mg(2+) as a cofactor.

The enzyme catalyses (2R)-2,3-dihydroxy-3-methylbutanoate + NADP(+) = (2S)-2-acetolactate + NADPH + H(+). It catalyses the reaction (2R,3R)-2,3-dihydroxy-3-methylpentanoate + NADP(+) = (S)-2-ethyl-2-hydroxy-3-oxobutanoate + NADPH + H(+). It participates in amino-acid biosynthesis; L-isoleucine biosynthesis; L-isoleucine from 2-oxobutanoate: step 2/4. Its pathway is amino-acid biosynthesis; L-valine biosynthesis; L-valine from pyruvate: step 2/4. Its function is as follows. Involved in the biosynthesis of branched-chain amino acids (BCAA). Catalyzes an alkyl-migration followed by a ketol-acid reduction of (S)-2-acetolactate (S2AL) to yield (R)-2,3-dihydroxy-isovalerate. In the isomerase reaction, S2AL is rearranged via a Mg-dependent methyl migration to produce 3-hydroxy-3-methyl-2-ketobutyrate (HMKB). In the reductase reaction, this 2-ketoacid undergoes a metal-dependent reduction by NADPH to yield (R)-2,3-dihydroxy-isovalerate. The polypeptide is Ketol-acid reductoisomerase (NADP(+)) (Gluconacetobacter diazotrophicus (strain ATCC 49037 / DSM 5601 / CCUG 37298 / CIP 103539 / LMG 7603 / PAl5)).